Reading from the N-terminus, the 801-residue chain is Palmitoyl thioesterase CPT1C (801 aa).

The Cytoplasmic segment spans residues 1 to 49; it reads MAEAHQASSLLSSLSSDGAEVELSSSVWQEIYLSALRSWKRNLWRVWND. The chain crosses the membrane as a helical span at residues 50 to 70; that stretch reads FLAGVVPATPLSWLFLFSTIQ. Over 71-103 the chain is Mitochondrial intermembrane; sequence LACLLQLDPSLGLMEKIKELLPDWGGQHHQLQG. A helical transmembrane segment spans residues 104–124; it reads LLAAAVFASCLWGTLIFTLHV. Residues 125-801 are Cytoplasmic-facing; the sequence is ALRLLLSHHG…PNIPKSSTNL (677 aa). His469 (proton acceptor) is an active-site residue. 551 to 563 lines the CoA pocket; it reads GKSFIKGCHVSSD. Residues Tyr585, Ser587, and Thr598 each coordinate (R)-carnitine. A required for interaction with GRIA1 region spans residues 760–801; that stretch reads LFQAGQQFKRQFTGLGESSGWKYSNLSCKTVDPNIPKSSTNL.

The protein belongs to the carnitine/choline acetyltransferase family. Peripherally associated with AMPAR complex. AMPAR complex consists of an inner core made of 4 pore-forming GluA/GRIA proteins (GRIA1, GRIA2, GRIA3 and GRIA4) and 4 major auxiliary subunits arranged in a twofold symmetry. One of the two pairs of distinct binding sites is occupied either by CNIH2, CNIH3 or CACNG2, CACNG3. The other harbors CACNG2, CACNG3, CACNG4, CACNG8 or GSG1L. This inner core of AMPAR complex is complemented by outer core constituents binding directly to the GluA/GRIA proteins at sites distinct from the interaction sites of the inner core constituents. Outer core constituents include at least PRRT1, PRRT2, CKAMP44/SHISA9, FRRS1L and NRN1. The proteins of the inner and outer core serve as a platform for other, more peripherally associated AMPAR constituents, including CPT1C. Alone or in combination, these auxiliary subunits control the gating and pharmacology of the AMPAR complex and profoundly impact their biogenesis and protein processing. Interacts with SACM1L; the interaction regulates SACM1L phosphatidylinositol-3-phosphatase activity and translocation to endoplasmic reticulum/trans Golgi network in a malonyl-CoA dependent manner. Interacts with ATL1. Expressed in brain (at protein level).

It is found in the synapse. The protein resides in the cell projection. The protein localises to the dendrite. Its subcellular location is the axon. It localises to the endoplasmic reticulum membrane. It catalyses the reaction S-hexadecanoyl-L-cysteinyl-[protein] + H2O = L-cysteinyl-[protein] + hexadecanoate + H(+). Its function is as follows. Palmitoyl thioesterase specifically expressed in the endoplasmic reticulum of neurons. Modulates the trafficking of the glutamate receptor, AMPAR, to plasma membrane through depalmitoylation of GRIA1. Also regulates AMPR trafficking through the regulation of SACM1L phosphatidylinositol-3-phosphatase activity by interaction in a malonyl-CoA dependent manner. Binds malonyl-CoA and couples malonyl-CoA to ceramide levels, necessary for proper spine maturation and contributing to systemic energy homeostasis and appetite control. Binds to palmitoyl-CoA, but does not have carnitine palmitoyltransferase 1 catalytic activity or at very low levels. The chain is Palmitoyl thioesterase CPT1C (Cpt1c) from Rattus norvegicus (Rat).